The sequence spans 90 residues: uncharacterized protein (90 aa).

This is an uncharacterized protein from Aedes vexans (Inland floodwater mosquito).